A 419-amino-acid chain; its full sequence is Hyaluronan synthase (419 aa).

The next 5 helical transmembrane spans lie at 8-28, 33-53, 318-338, 345-365, and 376-396; these read LIVL…MYLF, VGIY…LSFL, IVAL…VAIG, AIQL…IVAL, and PASF…LQPL.

This sequence belongs to the NodC/HAS family. Mg(2+) is required as a cofactor.

The protein localises to the cell membrane. The enzyme catalyses [hyaluronan](n) + UDP-N-acetyl-alpha-D-glucosamine = N-acetyl-beta-D-glucosaminyl-(1-&gt;4)-[hyaluronan](n) + UDP + H(+). It catalyses the reaction N-acetyl-beta-D-glucosaminyl-(1-&gt;4)-[hyaluronan](n) + UDP-alpha-D-glucuronate = [hyaluronan](n+1) + UDP + H(+). Its pathway is glycan biosynthesis; hyaluronan biosynthesis. Its function is as follows. Glycosaminoglycan synthesis. The hyaluronic acid capsule is involved in the pathogenicity of group A Streptococci; it may be the major virulence determinant. In Streptococcus pyogenes serotype M18 (strain MGAS8232), this protein is Hyaluronan synthase (hasA).